The chain runs to 608 residues: MNHFPKLLSSQIGFDVAQTMLENFDRHYRIFREAAVDAKTLYERADWHGLQRLARERITSYDDRVQECVEVLQDEYDAENIDDEVWQQIKLHYIGLLTSHRQPECAETFFNSVCCKILHRSYFNNDFIFVRPAISTEYLENDEPAAKPTYRAYYPGTDGLAATLERIVTNFQLEPPFEDLTRDIGCVMQAITDEFGEFDAAPNFQIHVLSSLFFRNKSAYIVGRIINADRVLPFAVPIRHVRPGLLALDTVLLRRDLLQIIFSFSHSYFLVDMGVPSAYVDFLCTIMPGKPKAEIYTSVGLQKQGKNLFYRDLLHHLSHSSDRFIIAPGIKGLVMLVFTLPSFPYVFKIIKDHFPPPKETTREQIMEKYQLVKRHDRLGRMADTLEYSSVALPISRLDHALVRELEKEVPSLLEYEDGNLVIKHLYIERRMIPLNLYLQNGTDAEIEHGVKEYGNAVKELMKANIFPGDMLYKNFGVTRHGRVVFYDYDEIEYLTDCNVRRVPPPRNEEDELSGEPWYTVGPHDIFPETYGPFLLGDPRVRAVFMKHHADFFEASLWQASKDKLLQGELPDFYPYDVSLRFSVRYPDRFDSTPDAGDGDSAGDAQRAA.

ATP contacts are provided by residues 327 to 333 (APGIKGL) and Lys348. Residue Asp383 is part of the active site. Residues 589 to 608 (FDSTPDAGDGDSAGDAQRAA) form a disordered region.

Belongs to the AceK family.

The protein localises to the cytoplasm. It catalyses the reaction L-seryl-[isocitrate dehydrogenase] + ATP = O-phospho-L-seryl-[isocitrate dehydrogenase] + ADP + H(+). Its function is as follows. Bifunctional enzyme which can phosphorylate or dephosphorylate isocitrate dehydrogenase (IDH) on a specific serine residue. This is a regulatory mechanism which enables bacteria to bypass the Krebs cycle via the glyoxylate shunt in response to the source of carbon. When bacteria are grown on glucose, IDH is fully active and unphosphorylated, but when grown on acetate or ethanol, the activity of IDH declines drastically concomitant with its phosphorylation. This chain is Isocitrate dehydrogenase kinase/phosphatase, found in Burkholderia ambifaria (strain MC40-6).